The primary structure comprises 482 residues: tRNA sulfurtransferase (482 aa).

A THUMP domain is found at 61–165 (PAIRDALTRI…NDRLLLVKGR (105 aa)). ATP contacts are provided by residues 183–184 (LI), Lys265, Gly287, and Gln296. Cysteines 344 and 456 form a disulfide. Residues 404–482 (FGANDAILDI…GFSNVKVYRP (79 aa)) enclose the Rhodanese domain. Cys456 (cysteine persulfide intermediate) is an active-site residue.

It belongs to the ThiI family.

It is found in the cytoplasm. It catalyses the reaction [ThiI sulfur-carrier protein]-S-sulfanyl-L-cysteine + a uridine in tRNA + 2 reduced [2Fe-2S]-[ferredoxin] + ATP + H(+) = [ThiI sulfur-carrier protein]-L-cysteine + a 4-thiouridine in tRNA + 2 oxidized [2Fe-2S]-[ferredoxin] + AMP + diphosphate. The enzyme catalyses [ThiS sulfur-carrier protein]-C-terminal Gly-Gly-AMP + S-sulfanyl-L-cysteinyl-[cysteine desulfurase] + AH2 = [ThiS sulfur-carrier protein]-C-terminal-Gly-aminoethanethioate + L-cysteinyl-[cysteine desulfurase] + A + AMP + 2 H(+). The protein operates within cofactor biosynthesis; thiamine diphosphate biosynthesis. Functionally, catalyzes the ATP-dependent transfer of a sulfur to tRNA to produce 4-thiouridine in position 8 of tRNAs, which functions as a near-UV photosensor. Also catalyzes the transfer of sulfur to the sulfur carrier protein ThiS, forming ThiS-thiocarboxylate. This is a step in the synthesis of thiazole, in the thiamine biosynthesis pathway. The sulfur is donated as persulfide by IscS. In Klebsiella pneumoniae subsp. pneumoniae (strain ATCC 700721 / MGH 78578), this protein is tRNA sulfurtransferase.